A 270-amino-acid polypeptide reads, in one-letter code: Putative hydro-lyase H16_B1759 (270 aa).

Belongs to the D-glutamate cyclase family.

The polypeptide is Putative hydro-lyase H16_B1759 (Cupriavidus necator (strain ATCC 17699 / DSM 428 / KCTC 22496 / NCIMB 10442 / H16 / Stanier 337) (Ralstonia eutropha)).